The chain runs to 410 residues: Trans-splicing factor Raa2, chloroplastic (410 aa).

2 disordered regions span residues 1–40 and 56–106; these read MRTR…QRPA and AADH…QQQV. A chloroplast-targeting transit peptide spans 1–46; the sequence is MRTRAGAFFGKQRSTSPSGSSTSASRQWLRSSPGRTQRPAAHRVLA. A compositionally biased stretch (low complexity) spans 14 to 25; the sequence is STSPSGSSTSAS. Polar residues predominate over residues 26-35; that stretch reads RQWLRSSPGR. Residues 96-106 are compositionally biased toward low complexity; the sequence is RQAQRRQQQQV.

It belongs to the pseudouridine synthase TruB family. As to quaternary structure, possibly associated with other factors required for trans-splicing.

It localises to the plastid. The protein resides in the chloroplast. Functionally, required for trans-splicing of exons 2 and 3 of the chloroplast encoded psaA mRNA (a group II intron). It is not known if this protein has pseudouridine activity; mutation of the potential active site residue does not cause loss of trans-splicing. The sequence is that of Trans-splicing factor Raa2, chloroplastic (RAA2) from Chlamydomonas reinhardtii (Chlamydomonas smithii).